Reading from the N-terminus, the 219-residue chain is Flagellin B4 (219 aa).

A propeptide spanning residues 1–5 (MHRKG) is cleaved from the precursor.

Belongs to the archaeal flagellin family.

The protein resides in the archaeal flagellum. Its function is as follows. Flagellin is the subunit protein which polymerizes to form the filaments of archaeal flagella. In Pyrococcus abyssi (strain GE5 / Orsay), this protein is Flagellin B4 (flaB4).